The following is a 915-amino-acid chain: Probable inorganic carbon transporter subunit DabA (915 aa).

Zn(2+) is bound by residues C392, D394, H566, and C581.

This sequence belongs to the inorganic carbon transporter (TC 9.A.2) DabA family. In terms of assembly, forms a complex with DabB. Zn(2+) serves as cofactor.

It is found in the cell inner membrane. Part of an energy-coupled inorganic carbon pump. The chain is Probable inorganic carbon transporter subunit DabA from Nitrosospira multiformis (strain ATCC 25196 / NCIMB 11849 / C 71).